The following is a 412-amino-acid chain: Serine hydroxymethyltransferase (412 aa).

Residues Leu-120 and 124–126 (GHL) contribute to the (6S)-5,6,7,8-tetrahydrofolate site. At Lys-229 the chain carries N6-(pyridoxal phosphate)lysine. Residue 352-354 (SPF) coordinates (6S)-5,6,7,8-tetrahydrofolate.

It belongs to the SHMT family. Homodimer. Pyridoxal 5'-phosphate serves as cofactor.

The protein localises to the cytoplasm. It catalyses the reaction (6R)-5,10-methylene-5,6,7,8-tetrahydrofolate + glycine + H2O = (6S)-5,6,7,8-tetrahydrofolate + L-serine. Its pathway is one-carbon metabolism; tetrahydrofolate interconversion. It participates in amino-acid biosynthesis; glycine biosynthesis; glycine from L-serine: step 1/1. Catalyzes the reversible interconversion of serine and glycine with tetrahydrofolate (THF) serving as the one-carbon carrier. This reaction serves as the major source of one-carbon groups required for the biosynthesis of purines, thymidylate, methionine, and other important biomolecules. Also exhibits THF-independent aldolase activity toward beta-hydroxyamino acids, producing glycine and aldehydes, via a retro-aldol mechanism. The protein is Serine hydroxymethyltransferase of Ruminiclostridium cellulolyticum (strain ATCC 35319 / DSM 5812 / JCM 6584 / H10) (Clostridium cellulolyticum).